The primary structure comprises 319 residues: Pantothenate kinase (319 aa).

101–108 provides a ligand contact to ATP; that stretch reads GSVAVGKS.

This sequence belongs to the prokaryotic pantothenate kinase family.

The protein localises to the cytoplasm. It carries out the reaction (R)-pantothenate + ATP = (R)-4'-phosphopantothenate + ADP + H(+). The protein operates within cofactor biosynthesis; coenzyme A biosynthesis; CoA from (R)-pantothenate: step 1/5. This Clavibacter sepedonicus (Clavibacter michiganensis subsp. sepedonicus) protein is Pantothenate kinase.